We begin with the raw amino-acid sequence, 221 residues long: Secreted protein BARF1 (221 aa).

Positions 1–20 are cleaved as a signal peptide; it reads MARFIAQLLLLASCVAAGQA. Ig-like domains are found at residues 21-120 and 124-220; these read VTAF…EHLS and PLTL…GYLS. The N-linked (GlcNAc...) asparagine; by host glycan is linked to N95. An intrachain disulfide couples C146 to C201.

Homohexamer. Interacts with human CSF1. Post-translationally, phosphorylated on serine and threonine by host.

It is found in the secreted. Plays diverse functions in immunomodulation and oncogenicity, maybe by acting as a functional receptor for human CSF1. May inhibit interferon secretion from mononuclear cells. Exhibits oncogenic activity in vitro. This Epstein-Barr virus (strain B95-8) (HHV-4) protein is Secreted protein BARF1.